The following is a 429-amino-acid chain: UDP-N-acetylglucosamine 1-carboxyvinyltransferase (429 aa).

Phosphoenolpyruvate is bound at residue 22 to 23; that stretch reads KN. Arginine 102 lines the UDP-N-acetyl-alpha-D-glucosamine pocket. The active-site Proton donor is the cysteine 126. Cysteine 126 carries the 2-(S-cysteinyl)pyruvic acid O-phosphothioketal modification. UDP-N-acetyl-alpha-D-glucosamine-binding positions include 131-135, aspartate 316, and isoleucine 338; that span reads RPVDL.

This sequence belongs to the EPSP synthase family. MurA subfamily.

It is found in the cytoplasm. It carries out the reaction phosphoenolpyruvate + UDP-N-acetyl-alpha-D-glucosamine = UDP-N-acetyl-3-O-(1-carboxyvinyl)-alpha-D-glucosamine + phosphate. The protein operates within cell wall biogenesis; peptidoglycan biosynthesis. In terms of biological role, cell wall formation. Adds enolpyruvyl to UDP-N-acetylglucosamine. This chain is UDP-N-acetylglucosamine 1-carboxyvinyltransferase, found in Rhodopseudomonas palustris (strain TIE-1).